The sequence spans 32 residues: Photosystem II reaction center protein T (32 aa).

A helical transmembrane segment spans residues 3–23 (AITYTFILFLTLGLLFFAVAF).

Belongs to the PsbT family. PSII is composed of 1 copy each of membrane proteins PsbA, PsbB, PsbC, PsbD, PsbE, PsbF, PsbH, PsbI, PsbJ, PsbK, PsbL, PsbM, PsbT, PsbX, PsbY, PsbZ, Psb30/Ycf12, peripheral proteins PsbO, CyanoQ (PsbQ), PsbU, PsbV and a large number of cofactors. It forms dimeric complexes.

It localises to the cellular thylakoid membrane. In terms of biological role, found at the monomer-monomer interface of the photosystem II (PS II) dimer, plays a role in assembly and dimerization of PSII. PSII is a light-driven water plastoquinone oxidoreductase, using light energy to abstract electrons from H(2)O, generating a proton gradient subsequently used for ATP formation. This is Photosystem II reaction center protein T from Synechococcus sp. (strain JA-2-3B'a(2-13)) (Cyanobacteria bacterium Yellowstone B-Prime).